The primary structure comprises 586 residues: Probable lysosomal cobalamin transporter (586 aa).

Transmembrane regions (helical) follow at residues 10–30 (IWIA…VTTF), 47–67 (VVSL…IALV), 96–116 (IVYY…IPFA), 147–167 (SGFI…PAAG), 191–211 (ALTF…VLYT), 315–335 (LVGG…MLIT), 378–398 (IIMA…LATV), 420–440 (ILIA…SIAM), and 509–529 (VFGA…LIVL). N-linked (GlcNAc...) asparagine glycosylation occurs at Asn-540.

Belongs to the LIMR family. LMBRD1 subfamily.

The protein resides in the lysosome membrane. Functionally, probable lysosomal cobalamin transporter. Required to export cobalamin from lysosomes allowing its conversion to cofactors. The sequence is that of Probable lysosomal cobalamin transporter from Pyricularia oryzae (strain 70-15 / ATCC MYA-4617 / FGSC 8958) (Rice blast fungus).